A 154-amino-acid polypeptide reads, in one-letter code: Spermatogenesis-associated protein 19, mitochondrial (154 aa).

Residues 1–24 constitute a mitochondrion transit peptide; it reads MIITTWIVYILARKGAGLPFPPKV. Residues S26 and S116 each carry the phosphoserine modification.

The protein resides in the mitochondrion outer membrane. It localises to the mitochondrion. It is found in the cell projection. Its subcellular location is the cilium. The protein localises to the flagellum. In terms of biological role, essential for sperm motility and male fertility. Plays an important role in sperm motility by regulating the organization and function of the mitochondria and is also required for correct sperm midpiece assembly. This Bos taurus (Bovine) protein is Spermatogenesis-associated protein 19, mitochondrial (SPATA19).